Here is a 181-residue protein sequence, read N- to C-terminus: NAD(P)H-quinone oxidoreductase subunit 6, chloroplastic (181 aa).

Helical transmembrane passes span 10 to 30 (TLLF…VVLL), 33 to 53 (VIYS…LYLL), 62 to 82 (AQVL…IMLV), 98 to 118 (IISA…IFTT), and 153 to 173 (LFPF…AITI).

This sequence belongs to the complex I subunit 6 family. NDH is composed of at least 16 different subunits, 5 of which are encoded in the nucleus.

The protein localises to the plastid. It is found in the chloroplast thylakoid membrane. It carries out the reaction a plastoquinone + NADH + (n+1) H(+)(in) = a plastoquinol + NAD(+) + n H(+)(out). The catalysed reaction is a plastoquinone + NADPH + (n+1) H(+)(in) = a plastoquinol + NADP(+) + n H(+)(out). NDH shuttles electrons from NAD(P)H:plastoquinone, via FMN and iron-sulfur (Fe-S) centers, to quinones in the photosynthetic chain and possibly in a chloroplast respiratory chain. The immediate electron acceptor for the enzyme in this species is believed to be plastoquinone. Couples the redox reaction to proton translocation, and thus conserves the redox energy in a proton gradient. This is NAD(P)H-quinone oxidoreductase subunit 6, chloroplastic (ndhG) from Zygnema circumcarinatum (Green alga).